We begin with the raw amino-acid sequence, 426 residues long: Gamma-glutamyl phosphate reductase (426 aa).

It belongs to the gamma-glutamyl phosphate reductase family.

It localises to the cytoplasm. It carries out the reaction L-glutamate 5-semialdehyde + phosphate + NADP(+) = L-glutamyl 5-phosphate + NADPH + H(+). The protein operates within amino-acid biosynthesis; L-proline biosynthesis; L-glutamate 5-semialdehyde from L-glutamate: step 2/2. Functionally, catalyzes the NADPH-dependent reduction of L-glutamate 5-phosphate into L-glutamate 5-semialdehyde and phosphate. The product spontaneously undergoes cyclization to form 1-pyrroline-5-carboxylate. This is Gamma-glutamyl phosphate reductase from Cupriavidus pinatubonensis (strain JMP 134 / LMG 1197) (Cupriavidus necator (strain JMP 134)).